A 305-amino-acid chain; its full sequence is Protoheme IX farnesyltransferase (305 aa).

9 helical membrane-spanning segments follow: residues 28–48, 52–72, 102–122, 123–143, 150–170, 176–196, 221–241, 243–263, and 282–302; these read VVLL…PGIV, VFLF…AINH, IFAA…VNLL, TALL…LYLK, IVIG…AVTG, ALIL…ALAI, INIL…FVIM, SGWI…YWAI, and IWYL…YLAL.

The protein belongs to the UbiA prenyltransferase family. Protoheme IX farnesyltransferase subfamily.

Its subcellular location is the cell inner membrane. It carries out the reaction heme b + (2E,6E)-farnesyl diphosphate + H2O = Fe(II)-heme o + diphosphate. It participates in porphyrin-containing compound metabolism; heme O biosynthesis; heme O from protoheme: step 1/1. Functionally, converts heme B (protoheme IX) to heme O by substitution of the vinyl group on carbon 2 of heme B porphyrin ring with a hydroxyethyl farnesyl side group. The protein is Protoheme IX farnesyltransferase of Coxiella burnetii (strain CbuK_Q154) (Coxiella burnetii (strain Q154)).